A 296-amino-acid chain; its full sequence is Thymidylate synthase (296 aa).

DUMP-binding positions include Arg-24 and 151–152 (RR). Residue Cys-171 is the Nucleophile of the active site. Residues 197 to 200 (RSAD), Asn-208, and 238 to 240 (HVY) contribute to the dUMP site. Asp-200 is a (6R)-5,10-methylene-5,6,7,8-tetrahydrofolate binding site.

The protein belongs to the thymidylate synthase family. Homodimer.

The catalysed reaction is dUMP + (6R)-5,10-methylene-5,6,7,8-tetrahydrofolate = 7,8-dihydrofolate + dTMP. The protein operates within pyrimidine metabolism; dTTP biosynthesis. This is Thymidylate synthase (tms1) from Agaricus bisporus (White button mushroom).